The chain runs to 437 residues: Probable carboxypeptidase HCBG_00059 (437 aa).

The first 20 residues, 1–20 (MKLSNLAALLSASTVAPVAA), serve as a signal peptide directing secretion. A glycan (N-linked (GlcNAc...) asparagine) is linked at Asn-153. Asp-163 serves as a coordination point for Zn(2+). The Proton acceptor role is filled by Glu-195. Glu-196 contributes to the Zn(2+) binding site. N-linked (GlcNAc...) asparagine glycosylation is present at Asn-346.

Belongs to the peptidase M20A family. It depends on Zn(2+) as a cofactor.

It is found in the secreted. This chain is Probable carboxypeptidase HCBG_00059, found in Ajellomyces capsulatus (strain G186AR / H82 / ATCC MYA-2454 / RMSCC 2432) (Darling's disease fungus).